A 306-amino-acid polypeptide reads, in one-letter code: UDP-3-O-acyl-N-acetylglucosamine deacetylase (306 aa).

Positions 79, 238, and 242 each coordinate Zn(2+). The active-site Proton donor is His-265.

Belongs to the LpxC family. Zn(2+) is required as a cofactor.

It catalyses the reaction a UDP-3-O-[(3R)-3-hydroxyacyl]-N-acetyl-alpha-D-glucosamine + H2O = a UDP-3-O-[(3R)-3-hydroxyacyl]-alpha-D-glucosamine + acetate. It functions in the pathway glycolipid biosynthesis; lipid IV(A) biosynthesis; lipid IV(A) from (3R)-3-hydroxytetradecanoyl-[acyl-carrier-protein] and UDP-N-acetyl-alpha-D-glucosamine: step 2/6. In terms of biological role, catalyzes the hydrolysis of UDP-3-O-myristoyl-N-acetylglucosamine to form UDP-3-O-myristoylglucosamine and acetate, the committed step in lipid A biosynthesis. The chain is UDP-3-O-acyl-N-acetylglucosamine deacetylase from Yersinia pseudotuberculosis serotype O:1b (strain IP 31758).